The sequence spans 88 residues: Small ribosomal subunit protein bS16 (88 aa).

It belongs to the bacterial ribosomal protein bS16 family.

This Halothermothrix orenii (strain H 168 / OCM 544 / DSM 9562) protein is Small ribosomal subunit protein bS16.